We begin with the raw amino-acid sequence, 496 residues long: L-arabinose isomerase (496 aa).

Residues Glu-306, Glu-331, His-348, and His-447 each coordinate Mn(2+).

The protein belongs to the arabinose isomerase family. Mn(2+) is required as a cofactor.

The catalysed reaction is beta-L-arabinopyranose = L-ribulose. It functions in the pathway carbohydrate degradation; L-arabinose degradation via L-ribulose; D-xylulose 5-phosphate from L-arabinose (bacterial route): step 1/3. Its function is as follows. Catalyzes the conversion of L-arabinose to L-ribulose. This Geobacillus thermodenitrificans (strain NG80-2) protein is L-arabinose isomerase.